Reading from the N-terminus, the 93-residue chain is Neutrophil cationic peptide 1 type A (93 aa).

The first 19 residues, 1–19 (MRTVPLFAACLLLTLMAQA), serve as a signal peptide directing secretion. Residues 20-62 (EPLPRAADHSDTKMKGDREDHVAVISFWEEESTSLEDAGAGAG) constitute a propeptide that is removed on maturation. 3 cysteine pairs are disulfide-bonded: C65/C93, C67/C82, and C72/C92.

The protein belongs to the alpha-defensin family.

It is found in the secreted. Has antibiotic, anti-fungi and antiviral activity. This is Neutrophil cationic peptide 1 type A from Cavia porcellus (Guinea pig).